A 301-amino-acid chain; its full sequence is Single-stranded DNA-binding protein (301 aa).

The tract at residues 3-7 is LAST; sequence KRKST. The Zn(2+) site is built by H64, C77, C87, and C90. Residues 272–301 are disordered; sequence TKTEDDFMSSSSGSSSSADDTDLDDLLNDL. Residues 279 to 289 show a composition bias toward low complexity; that stretch reads MSSSSGSSSSA. Residues 290-301 are compositionally biased toward acidic residues; the sequence is DDTDLDDLLNDL.

It belongs to the Tequatrovirus single-stranded DNA-binding protein family. Homodimer in the absence of DNA, monomer when binding DNA. Interacts with the DNA helicase assembly protein; a ternary complex between the helicase assembly protein, the single-stranded DNA-binding protein and ssDNA is an obligatory intermediate in the helicase loading mechanism. Part of the replicase complex that includes the DNA polymerase, the polymerase clamp, the clamp loader complex, the single-stranded DNA binding protein, the primase, the DnaB-like SF4 replicative helicase and the helicase assembly factor. Interacts (via C-terminus) with the viral SF1 dDA helicase. Interacts with the viral SF2 UvsW repair helicase.

Single-stranded DNA-binding protein that participates in viral DNA replication, recombination, and repair. Coats the lagging-strand ssDNA as the replication fork advances. Stimulates the activities of viral DNA polymerase and DnaB-like SF4 replicative helicase, probably via its interaction with the helicase assembly factor. Stimulates the unwinding activity of UvsW helicase, inhibits it DNA winding activity. Together with DnaB-like SF4 replicative helicase and the helicase assembly factor, promotes pairing of two homologous DNA molecules containing complementary single-stranded regions and mediates homologous DNA strand exchange. Also promotes the formation of joint molecules. mRNA specific autogenous translational repressor. The sequence is that of Single-stranded DNA-binding protein from Escherichia coli (Bacteriophage T4).